The primary structure comprises 307 residues: Protoheme IX farnesyltransferase (307 aa).

Helical transmembrane passes span 32-52 (MGIVNSNTLTVFTGFWLALHF), 65-85 (FFTIVGSALIMAGVCCLNNYI), 108-128 (PGFALAFGLVILLLGFVFLLL), 131-151 (PMAVLISFIGAFTYVVLYTLW), 158-178 (LNTVVGSISGAVPPLIGWAAI), 186-206 (IAWMLFLIMFIWQIPHFLALA), 251-271 (LGITFMVIATLLNIGWIALGL), and 287-307 (FVYSLNYLTILFVSMIVVTFF).

It belongs to the UbiA prenyltransferase family. Protoheme IX farnesyltransferase subfamily. In terms of assembly, interacts with CtaA.

It localises to the cell membrane. The catalysed reaction is heme b + (2E,6E)-farnesyl diphosphate + H2O = Fe(II)-heme o + diphosphate. It participates in porphyrin-containing compound metabolism; heme O biosynthesis; heme O from protoheme: step 1/1. In terms of biological role, converts heme B (protoheme IX) to heme O by substitution of the vinyl group on carbon 2 of heme B porphyrin ring with a hydroxyethyl farnesyl side group. The chain is Protoheme IX farnesyltransferase from Bacillus mycoides (strain KBAB4) (Bacillus weihenstephanensis).